Here is a 571-residue protein sequence, read N- to C-terminus: FAD-linked oxidoreductase patO (571 aa).

Residues 1-23 (MRLHQSPPRLLVCILSVLQVSAG) form the signal peptide. Asn-47, Asn-101, Asn-125, Asn-179, Asn-341, Asn-374, Asn-380, Asn-421, Asn-445, and Asn-480 each carry an N-linked (GlcNAc...) asparagine glycan. The region spanning 115-294 (TLGAMVRYAV…YAVTVKTFPD (180 aa)) is the FAD-binding PCMH-type domain.

It belongs to the oxygen-dependent FAD-linked oxidoreductase family. FAD serves as cofactor.

The protein localises to the vacuole lumen. The protein operates within mycotoxin biosynthesis; patulin biosynthesis. In terms of biological role, FAD-linked oxidoreductase; part of the gene cluster that mediates the biosynthesis of patulin, an acetate-derived tetraketide mycotoxin produced by several fungal species that shows antimicrobial properties against several bacteria. PatO acts with patJ in the vacuole to convert gentisyl alcohol to isoepoxydon. The pathway begins with the synthesis of 6-methylsalicylic acid by the polyketide synthase (PKS) patK via condensation of acetate and malonate units. The 6-methylsalicylic acid decarboxylase patG then catalyzes the decarboxylation of 6-methylsalicylic acid to yield m-cresol (also known as 3-methylphenol). These first reactions occur in the cytosol. The intermediate m-cresol is then transported into the endoplasmic reticulum where the cytochrome P450 monooxygenase patH converts it to m-hydroxybenzyl alcohol, which is further converted to gentisyl alcohol by the cytochrome P450 monooxygenase patI. The oxidoreductases patJ and patO further convert gentisyl alcohol to isoepoxydon in the vacuole. PatN catalyzes then the transformation of isoepoxydon into phyllostine. The cluster protein patF is responsible for the conversion from phyllostine to neopatulin whereas the alcohol dehydrogenase patD converts neopatulin to E-ascladiol. The steps between isoepoxydon and E-ascladiol occur in the cytosol, and E-ascladiol is probably secreted to the extracellular space by one of the cluster-specific transporters patC or patM. Finally, the secreted patulin synthase patE catalyzes the conversion of E-ascladiol to patulin. The protein is FAD-linked oxidoreductase patO of Penicillium expansum (Blue mold rot fungus).